Here is a 169-residue protein sequence, read N- to C-terminus: Cell division inhibitor SulA (169 aa).

The tract at residues 106–112 (ALRTGNY) is ftsZ binding. The lon protease binding stretch occupies residues 162–169 (KIHSNLYH).

It belongs to the SulA family. As to quaternary structure, interacts with FtsZ. Post-translationally, is rapidly cleaved and degraded by the Lon protease once DNA damage is repaired.

Functionally, component of the SOS system and an inhibitor of cell division. Accumulation of SulA causes rapid cessation of cell division and the appearance of long, non-septate filaments. In the presence of GTP, binds a polymerization-competent form of FtsZ in a 1:1 ratio, thus inhibiting FtsZ polymerization and therefore preventing it from participating in the assembly of the Z ring. This mechanism prevents the premature segregation of damaged DNA to daughter cells during cell division. The chain is Cell division inhibitor SulA from Citrobacter koseri (strain ATCC BAA-895 / CDC 4225-83 / SGSC4696).